The following is a 115-amino-acid chain: Phosphoribosyl-ATP pyrophosphatase (115 aa).

The protein belongs to the PRA-PH family.

The protein localises to the cytoplasm. It carries out the reaction 1-(5-phospho-beta-D-ribosyl)-ATP + H2O = 1-(5-phospho-beta-D-ribosyl)-5'-AMP + diphosphate + H(+). The protein operates within amino-acid biosynthesis; L-histidine biosynthesis; L-histidine from 5-phospho-alpha-D-ribose 1-diphosphate: step 2/9. The polypeptide is Phosphoribosyl-ATP pyrophosphatase (Bordetella bronchiseptica (strain ATCC BAA-588 / NCTC 13252 / RB50) (Alcaligenes bronchisepticus)).